The sequence spans 161 residues: Cytochrome c-type biogenesis protein CcmE (161 aa).

Over 1–8 (MNARRKKR) the chain is Cytoplasmic. Residues 9–29 (LALATALIGGVAAIASLLLYA) traverse the membrane as a helical; Signal-anchor for type II membrane protein segment. Over 30-161 (LNSNLNLFYT…EYDSTQKTGY (132 aa)) the chain is Periplasmic. Residues histidine 131 and tyrosine 135 each coordinate heme.

It belongs to the CcmE/CycJ family.

It localises to the cell inner membrane. Functionally, heme chaperone required for the biogenesis of c-type cytochromes. Transiently binds heme delivered by CcmC and transfers the heme to apo-cytochromes in a process facilitated by CcmF and CcmH. This Shewanella loihica (strain ATCC BAA-1088 / PV-4) protein is Cytochrome c-type biogenesis protein CcmE.